A 282-amino-acid chain; its full sequence is ATP phosphoribosyltransferase (282 aa).

It belongs to the ATP phosphoribosyltransferase family. Long subfamily. Mg(2+) serves as cofactor.

Its subcellular location is the cytoplasm. The catalysed reaction is 1-(5-phospho-beta-D-ribosyl)-ATP + diphosphate = 5-phospho-alpha-D-ribose 1-diphosphate + ATP. It participates in amino-acid biosynthesis; L-histidine biosynthesis; L-histidine from 5-phospho-alpha-D-ribose 1-diphosphate: step 1/9. Feedback inhibited by histidine. Its function is as follows. Catalyzes the condensation of ATP and 5-phosphoribose 1-diphosphate to form N'-(5'-phosphoribosyl)-ATP (PR-ATP). Has a crucial role in the pathway because the rate of histidine biosynthesis seems to be controlled primarily by regulation of HisG enzymatic activity. In Micrococcus luteus (strain ATCC 4698 / DSM 20030 / JCM 1464 / CCM 169 / CCUG 5858 / IAM 1056 / NBRC 3333 / NCIMB 9278 / NCTC 2665 / VKM Ac-2230) (Micrococcus lysodeikticus), this protein is ATP phosphoribosyltransferase.